The chain runs to 371 residues: Protein NDRG2 (371 aa).

Residues 1–21 (MAELQEVQITEEKPLLPGQTP) form a disordered region. At Ala-2 the chain carries N-acetylalanine. Thr-20 is subject to Phosphothreonine. 2 positions are modified to phosphoserine: Ser-326 and Ser-328. The residue at position 330 (Thr-330) is a Phosphothreonine. Ser-332 is modified (phosphoserine). Position 334 is a phosphothreonine (Thr-334). A disordered region spans residues 334–371 (TSAASVDGNRSRSRTLSQSSESGTLSSGPPGHTMEVSC). Residues Ser-335, Ser-338, and Ser-344 each carry the phosphoserine modification. Over residues 347–361 (RTLSQSSESGTLSSG) the composition is skewed to low complexity. Thr-348 is subject to Phosphothreonine. A phosphoserine mark is found at Ser-350, Ser-352, Ser-353, and Ser-355. Phosphothreonine is present on Thr-357. The residue at position 370 (Ser-370) is a Phosphoserine.

Belongs to the NDRG family. Interacts with CTNNB1.

It localises to the cytoplasm. The protein resides in the perinuclear region. Its subcellular location is the cell projection. It is found in the growth cone. Its function is as follows. Contributes to the regulation of the Wnt signaling pathway. Down-regulates CTNNB1-mediated transcriptional activation of target genes, such as CCND1, and may thereby act as tumor suppressor. May be involved in dendritic cell and neuron differentiation. In Pongo abelii (Sumatran orangutan), this protein is Protein NDRG2 (NDRG2).